A 37-amino-acid polypeptide reads, in one-letter code: Large ribosomal subunit protein bL36 (37 aa).

It belongs to the bacterial ribosomal protein bL36 family.

This chain is Large ribosomal subunit protein bL36, found in Solidesulfovibrio magneticus (strain ATCC 700980 / DSM 13731 / RS-1) (Desulfovibrio magneticus).